Here is a 630-residue protein sequence, read N- to C-terminus: 1-deoxy-D-xylulose-5-phosphate synthase (630 aa).

Residues His-87 and 128–130 each bind thiamine diphosphate; that span reads GHS. Position 159 (Asp-159) interacts with Mg(2+). Thiamine diphosphate-binding positions include 160–161, Asn-188, Phe-295, and Glu-377; that span reads GA. Residue Asn-188 participates in Mg(2+) binding.

It belongs to the transketolase family. DXPS subfamily. Homodimer. Mg(2+) is required as a cofactor. Requires thiamine diphosphate as cofactor.

The enzyme catalyses D-glyceraldehyde 3-phosphate + pyruvate + H(+) = 1-deoxy-D-xylulose 5-phosphate + CO2. It functions in the pathway metabolic intermediate biosynthesis; 1-deoxy-D-xylulose 5-phosphate biosynthesis; 1-deoxy-D-xylulose 5-phosphate from D-glyceraldehyde 3-phosphate and pyruvate: step 1/1. Catalyzes the acyloin condensation reaction between C atoms 2 and 3 of pyruvate and glyceraldehyde 3-phosphate to yield 1-deoxy-D-xylulose-5-phosphate (DXP). The sequence is that of 1-deoxy-D-xylulose-5-phosphate synthase from Pseudomonas syringae pv. syringae (strain B728a).